The following is a 183-amino-acid chain: Ribonuclease H (183 aa).

Residues 2–151 (SQARFIAFSD…VDQLAQAAAR (150 aa)) form the RNase H type-1 domain. Mg(2+) contacts are provided by D11, E57, D79, and D143.

It belongs to the RNase H family. In terms of assembly, monomer. It depends on Mg(2+) as a cofactor.

The protein resides in the cytoplasm. The enzyme catalyses Endonucleolytic cleavage to 5'-phosphomonoester.. In terms of biological role, endonuclease that specifically degrades the RNA of RNA-DNA hybrids. In Anaeromyxobacter dehalogenans (strain 2CP-C), this protein is Ribonuclease H.